The primary structure comprises 190 residues: Peptidoglycan recognition protein 1 (190 aa).

Residues 1 to 21 (MSRRYTPLAWVLLALLGLGAA) form the signal peptide. Q22 is subject to Pyrrolidone carboxylic acid. Cystine bridges form between C24-C148, C40-C85, and C61-C67. An N-acetylmuramoyl-L-alanine amidase domain is found at 46 to 174 (QPVRYVVVSH…RDVQQTLSPG (129 aa)).

The protein belongs to the N-acetylmuramoyl-L-alanine amidase 2 family. In terms of assembly, homodimer; disulfide-linked.

Its subcellular location is the secreted. It localises to the cytoplasmic granule. Functionally, innate immunity protein that plays several important functions in antimicrobial and antitumor defense systems. Acts as a pattern receptor that binds to murein peptidoglycans (PGN) of Gram-positive bacteria and thus provides bactericidal activity. Forms an equimolar complex with heat shock protein HSPA1A and induces programmed cell death through apoptosis and necroptosis in tumor cell lines by activating the TNFR1 receptor on the target cell membrane. In addition, acts in complex with the Ca(2+)-binding protein S100A4 as a chemoattractant able to induce lymphocyte movement. Mechanistically, this complex acts as a ligand of the chemotactic receptors CCR5 and CXCR3 which are present on the cells of the immune system. Promotes also the activation of lymphocytes that become able to kill virus-infected cells as well as tumor cells by modulating the spectrum of their target-cell specificity. Induction of cytotoxicity on monocyte surface requires interaction with TREM1 receptor. This Bos indicus (Zebu) protein is Peptidoglycan recognition protein 1 (PGLYRP1).